The primary structure comprises 468 residues: UDP-N-acetylmuramate--L-alanine ligase (468 aa).

117–123 is a binding site for ATP; the sequence is GTHGKTT.

This sequence belongs to the MurCDEF family.

It localises to the cytoplasm. It carries out the reaction UDP-N-acetyl-alpha-D-muramate + L-alanine + ATP = UDP-N-acetyl-alpha-D-muramoyl-L-alanine + ADP + phosphate + H(+). The protein operates within cell wall biogenesis; peptidoglycan biosynthesis. Its function is as follows. Cell wall formation. This is UDP-N-acetylmuramate--L-alanine ligase from Maricaulis maris (strain MCS10) (Caulobacter maris).